Reading from the N-terminus, the 570-residue chain is Dihydroxy-acid dehydratase (570 aa).

Position 61 (Cys-61) interacts with [2Fe-2S] cluster. Asp-94 is a binding site for Mg(2+). Cys-135 is a binding site for [2Fe-2S] cluster. Residues Asp-136 and Lys-137 each contribute to the Mg(2+) site. N6-carboxylysine is present on Lys-137. [2Fe-2S] cluster is bound at residue Cys-207. Glu-459 contacts Mg(2+). The active-site Proton acceptor is the Ser-485.

Belongs to the IlvD/Edd family. Homodimer. Requires [2Fe-2S] cluster as cofactor. The cofactor is Mg(2+).

The catalysed reaction is (2R)-2,3-dihydroxy-3-methylbutanoate = 3-methyl-2-oxobutanoate + H2O. It carries out the reaction (2R,3R)-2,3-dihydroxy-3-methylpentanoate = (S)-3-methyl-2-oxopentanoate + H2O. The protein operates within amino-acid biosynthesis; L-isoleucine biosynthesis; L-isoleucine from 2-oxobutanoate: step 3/4. It participates in amino-acid biosynthesis; L-valine biosynthesis; L-valine from pyruvate: step 3/4. In terms of biological role, functions in the biosynthesis of branched-chain amino acids. Catalyzes the dehydration of (2R,3R)-2,3-dihydroxy-3-methylpentanoate (2,3-dihydroxy-3-methylvalerate) into 2-oxo-3-methylpentanoate (2-oxo-3-methylvalerate) and of (2R)-2,3-dihydroxy-3-methylbutanoate (2,3-dihydroxyisovalerate) into 2-oxo-3-methylbutanoate (2-oxoisovalerate), the penultimate precursor to L-isoleucine and L-valine, respectively. This Lactococcus lactis subsp. cremoris (strain MG1363) protein is Dihydroxy-acid dehydratase.